The following is a 132-amino-acid chain: Global transcriptional regulator Spx (132 aa).

A disulfide bridge connects residues Cys-10 and Cys-13.

Belongs to the ArsC family. Spx subfamily. As to quaternary structure, interacts with the C-terminal domain of the alpha subunit of the RNAP.

The protein localises to the cytoplasm. Its function is as follows. Global transcriptional regulator that plays a key role in stress response and exerts either positive or negative regulation of genes. Acts by interacting with the C-terminal domain of the alpha subunit of the RNA polymerase (RNAP). This interaction can enhance binding of RNAP to the promoter region of target genes and stimulate their transcription, or block interaction of RNAP with activator. The protein is Global transcriptional regulator Spx of Enterococcus faecalis (strain ATCC 700802 / V583).